A 647-amino-acid chain; its full sequence is Threonine--tRNA ligase (647 aa).

Positions Met1–Thr61 constitute a TGS domain. The tract at residues Asp240 to Pro538 is catalytic. The Zn(2+) site is built by Cys334, His385, and His515.

This sequence belongs to the class-II aminoacyl-tRNA synthetase family. Homodimer. It depends on Zn(2+) as a cofactor.

It localises to the cytoplasm. It catalyses the reaction tRNA(Thr) + L-threonine + ATP = L-threonyl-tRNA(Thr) + AMP + diphosphate + H(+). In terms of biological role, catalyzes the attachment of threonine to tRNA(Thr) in a two-step reaction: L-threonine is first activated by ATP to form Thr-AMP and then transferred to the acceptor end of tRNA(Thr). Also edits incorrectly charged L-seryl-tRNA(Thr). This chain is Threonine--tRNA ligase, found in Streptococcus pyogenes serotype M6 (strain ATCC BAA-946 / MGAS10394).